A 439-amino-acid polypeptide reads, in one-letter code: C4-dicarboxylate transport protein (439 aa).

A run of 9 helical transmembrane segments spans residues 10 to 30 (LYVQVLAAIVIGVVLGHFYPP), 45 to 65 (LIKMIIAPVIFCTVVLGIAGM), 77 to 97 (LALLYFEIVSTLALIVGLVLV), 145 to 165 (AFAKGDILQVLLISVLFGFAL), 185 to 205 (VLFAIVGTIMKAAPIGAFGAM), 223 to 243 (LMGTFYLTCLFFIFAVLGTIT), 290 to 310 (VVGLVIPTGYSFNLDGTAIYL), 332 to 352 (TLLAVLLLTSKGAAGITGSGF), and 353 to 373 (IVLAASLSAVGHLPVAGLALI). Positions 415–439 (LNGQTAEEASAPQALPDRMESRIHH) are disordered.

Belongs to the dicarboxylate/amino acid:cation symporter (DAACS) (TC 2.A.23) family.

The protein resides in the cell inner membrane. Its function is as follows. Responsible for the transport of dicarboxylates such as succinate, fumarate, and malate from the periplasm across the membrane. The polypeptide is C4-dicarboxylate transport protein (Verminephrobacter eiseniae (strain EF01-2)).